Here is a 433-residue protein sequence, read N- to C-terminus: 28S rRNA (cytosine-C(5))-methyltransferase (433 aa).

Residues 235-241, Glu-259, Asp-286, and Asp-304 each bind S-adenosyl-L-methionine; that span reads CAAPGMK. The active-site Nucleophile is the Cys-357.

This sequence belongs to the class I-like SAM-binding methyltransferase superfamily. RsmB/NOP family.

It catalyses the reaction a cytidine in 28S rRNA + S-adenosyl-L-methionine = a 5-methylcytidine in 28S rRNA + S-adenosyl-L-homocysteine + H(+). In terms of biological role, S-adenosyl-L-methionine-dependent methyltransferase that specifically methylates the C(5) position of a cytosine in 28S rRNA. This is 28S rRNA (cytosine-C(5))-methyltransferase from Drosophila melanogaster (Fruit fly).